A 72-amino-acid chain; its full sequence is Antitoxin VapB11 (72 aa).

Functionally, antitoxin component of a type II toxin-antitoxin (TA) system. This Mycobacterium tuberculosis (strain CDC 1551 / Oshkosh) protein is Antitoxin VapB11 (vapB11).